The sequence spans 3130 residues: DNA polymerase zeta catalytic subunit (3130 aa).

Disordered stretches follow at residues 263–295 (AIWE…VPAT), 425–457 (GYRG…NEPQ), 487–510 (LCRN…MEWS), 524–548 (LDGT…SSVI), 697–728 (PNEN…EKGN), and 817–871 (VTYK…EKDN). The span at 286–295 (SQDHRFVPAT) shows a compositional bias: basic and acidic residues. A compositionally biased stretch (acidic residues) spans 497–509 (EDDDSSSGEEMEW). Composition is skewed to polar residues over residues 533 to 548 (DNPL…SSVI) and 699 to 728 (ENTL…EKGN). The span at 828 to 838 (SRLKLNKRKLA) shows a compositional bias: basic residues. The segment covering 842 to 854 (ETSTKSSETGSTK) has biased composition (low complexity). Polar residues predominate over residues 855–866 (DNFIQNNPCNSN). Serine 1030 carries the post-translational modification Phosphoserine. Disordered stretches follow at residues 1035 to 1095 (YPIY…YNAE), 1162 to 1231 (SRIG…DEKI), and 1537 to 1600 (RQQK…KLLK). Residue threonine 1041 is modified to Phosphothreonine. Basic residues-rich tracts occupy residues 1043–1061 (KKSH…KTGK) and 1166–1179 (KTSR…KSKA). Positions 1213-1231 (KTNEKGTSRKHTTLKDEKI) are enriched in basic and acidic residues. Residues 1540–1565 (KAQNANTTQDPLSNKHQPNKNISGSL) are compositionally biased toward polar residues. Residues 1570-1589 (ANKRTRSVTSPRKPRTPRST) show a composition bias toward basic residues. Residues 1590–1600 (KQKEKIPKLLK) are compositionally biased toward basic and acidic residues. Residue serine 1724 is modified to Phosphoserine. 5 disordered regions span residues 1845 to 1882 (NDML…KPLM), 1962 to 1984 (NPRP…SNSP), 2017 to 2050 (ERSK…PVVP), 2080 to 2150 (PTTG…SPVE), and 2216 to 2236 (APGL…NKKG). The mediates interaction with MAD2L2 stretch occupies residues 1847–1898 (MLTPTPDSSPRSTSSPSQSKNGSFTPRTANILKPLMSPPSREEIMATLLDHD). Residues 1849–1865 (TPTPDSSPRSTSSPSQS) show a composition bias toward low complexity. Serine 1967 is modified (phosphoserine). Polar residues predominate over residues 2080–2092 (PTTGCSQTASESQ). Low complexity predominate over residues 2113–2122 (YYISYSSPDS). Residues 2221–2236 (PLSTEPKTQKLSNKKG) show a composition bias toward polar residues. Positions 3042, 3045, 3054, and 3057 each coordinate Zn(2+). Residues 3042–3057 (CPVCDDLTQHGICSKC) form a CysA-type zinc finger. The [4Fe-4S] cluster site is built by cysteine 3086, cysteine 3089, cysteine 3099, and cysteine 3104. Positions 3086–3104 (CKNCTGCFDRHIPCVSLNC) match the CysB motif motif.

Belongs to the DNA polymerase type-B family. In terms of assembly, heterodimer with MAD2L2. This dimer forms the minimal DNA polymerase zeta complex (Pol-zeta2), with REV3L bearing DNA polymerase catalytic activity, although its activity is very low in this context. Component of the tetrameric Pol-zeta complex (Pol-zeta4), which consists of REV3L, MAD2L2, POLD2 and POLD3; Pol-zeta4 is the fully active form of DNA polymerase zeta. [4Fe-4S] cluster is required as a cofactor. Ubiquitously expressed.

It localises to the nucleus. It carries out the reaction DNA(n) + a 2'-deoxyribonucleoside 5'-triphosphate = DNA(n+1) + diphosphate. Catalytic subunit of the DNA polymerase zeta complex, an error-prone polymerase specialized in translesion DNA synthesis (TLS). Lacks an intrinsic 3'-5' exonuclease activity and thus has no proofreading function. This Homo sapiens (Human) protein is DNA polymerase zeta catalytic subunit (REV3L).